Reading from the N-terminus, the 873-residue chain is Tetratricopeptide repeat protein 16 (873 aa).

The disordered stretch occupies residues 1–20 (MTDSDEDALKVDQGPSRDIP). TPR repeat units follow at residues 61 to 94 (VREY…DPQL), 96 to 128 (DFYA…QQDN), 136 to 169 (TFVL…QPEK), 251 to 284 (AQQA…NPLD), 285 to 318 (PSLF…VTED), 331 to 364 (LLTY…EQQE), 365 to 398 (KGLY…SPQD), and 406 to 439 (GLLQ…NPQK). 2 disordered regions span residues 553 to 626 (EELK…TSET) and 639 to 873 (SATA…YEAV). A compositionally biased stretch (acidic residues) spans 571-582 (GEAEAPEEEEEK). Residues 583 to 593 (EKEKKEEKKSE) are compositionally biased toward basic and acidic residues. Composition is skewed to polar residues over residues 600–626 (ASLS…TSET), 639–663 (SATA…NNRE), and 675–693 (TQGQ…SQRR). Basic residues predominate over residues 694 to 708 (NSSKTKATIHKRNSS). Residues 709-750 (KTKATQSQRRNSSKTRATQGQGQSSSKTEATQGQRQSSSEIE) are compositionally biased toward polar residues. The segment covering 763–784 (KTTRSPRQRPRKVKAARGRSWR) has biased composition (basic residues). Composition is skewed to polar residues over residues 800–828 (RSST…GQRS) and 836–860 (GKSQ…SLSK).

The protein is Tetratricopeptide repeat protein 16 (TTC16) of Homo sapiens (Human).